Consider the following 112-residue polypeptide: K(+)/H(+) antiporter modulator KhtS (112 aa).

Positions Tyr-42–His-64 are disordered. Residues Ser-47 to Pro-60 are compositionally biased toward polar residues.

The protein localises to the cell membrane. Its function is as follows. Modulates the activity of the potassium/proton antiporter KhtU. Involved in protection of the cell from methylglyoxal, a toxic by-product of glycolysis. The protein is K(+)/H(+) antiporter modulator KhtS of Bacillus subtilis (strain 168).